Here is a 276-residue protein sequence, read N- to C-terminus: Octanoyltransferase LipM (276 aa).

A BPL/LPL catalytic domain is found at 33 to 247; the sequence is GELKPTLRFY…GFKDAFSLTF (215 aa). Cys-150 acts as the Acyl-thioester intermediate in catalysis.

It belongs to the octanoyltransferase LipM family. Monomer.

It carries out the reaction octanoyl-[ACP] + L-lysyl-[protein] = N(6)-octanoyl-L-lysyl-[protein] + holo-[ACP] + H(+). It participates in protein modification; protein lipoylation via endogenous pathway; protein N(6)-(lipoyl)lysine from octanoyl-[acyl-carrier-protein]. Functionally, catalyzes the transfer of endogenously produced octanoic acid from octanoyl-acyl-carrier-protein onto the lipoyl domain of GcvH, an intermediate carrier during protein lipoylation. This is Octanoyltransferase LipM from Exiguobacterium sp. (strain ATCC BAA-1283 / AT1b).